A 263-amino-acid chain; its full sequence is Orotidine 5'-phosphate decarboxylase (263 aa).

Residues Asp38, Lys60 to His62, Asp91 to Thr100, Tyr213, and Arg232 contribute to the substrate site. Lys93 serves as the catalytic Proton donor.

It belongs to the OMP decarboxylase family.

It catalyses the reaction orotidine 5'-phosphate + H(+) = UMP + CO2. It functions in the pathway pyrimidine metabolism; UMP biosynthesis via de novo pathway; UMP from orotate: step 2/2. This Rhizomucor pusillus protein is Orotidine 5'-phosphate decarboxylase (PYR4).